A 389-amino-acid polypeptide reads, in one-letter code: PqqA peptide cyclase (389 aa).

Residues 19–234 enclose the Radical SAM core domain; it reads VGLPLWLLAE…TNEYRDQLAA (216 aa). [4Fe-4S] cluster-binding residues include Cys33, Cys37, and Cys40.

Belongs to the radical SAM superfamily. PqqE family. In terms of assembly, interacts with PqqD. The interaction is necessary for activity of PqqE. The cofactor is [4Fe-4S] cluster.

It catalyses the reaction [PQQ precursor protein] + S-adenosyl-L-methionine = E-Y cross-linked-[PQQ precursor protein] + 5'-deoxyadenosine + L-methionine + H(+). The protein operates within cofactor biosynthesis; pyrroloquinoline quinone biosynthesis. Its function is as follows. Catalyzes the cross-linking of a glutamate residue and a tyrosine residue in the PqqA protein as part of the biosynthesis of pyrroloquinoline quinone (PQQ). The chain is PqqA peptide cyclase from Pseudomonas syringae pv. tomato (strain ATCC BAA-871 / DC3000).